The following is a 156-amino-acid chain: 6,7-dimethyl-8-ribityllumazine synthase (156 aa).

5-amino-6-(D-ribitylamino)uracil is bound by residues Phe22, 56–58 (AME), and 80–82 (AVI). Position 85-86 (85-86 (ET)) interacts with (2S)-2-hydroxy-3-oxobutyl phosphate. His88 serves as the catalytic Proton donor. Phe113 is a 5-amino-6-(D-ribitylamino)uracil binding site. Arg127 contributes to the (2S)-2-hydroxy-3-oxobutyl phosphate binding site.

This sequence belongs to the DMRL synthase family.

The enzyme catalyses (2S)-2-hydroxy-3-oxobutyl phosphate + 5-amino-6-(D-ribitylamino)uracil = 6,7-dimethyl-8-(1-D-ribityl)lumazine + phosphate + 2 H2O + H(+). The protein operates within cofactor biosynthesis; riboflavin biosynthesis; riboflavin from 2-hydroxy-3-oxobutyl phosphate and 5-amino-6-(D-ribitylamino)uracil: step 1/2. Catalyzes the formation of 6,7-dimethyl-8-ribityllumazine by condensation of 5-amino-6-(D-ribitylamino)uracil with 3,4-dihydroxy-2-butanone 4-phosphate. This is the penultimate step in the biosynthesis of riboflavin. This is 6,7-dimethyl-8-ribityllumazine synthase from Kosmotoga olearia (strain ATCC BAA-1733 / DSM 21960 / TBF 19.5.1).